Consider the following 565-residue polypeptide: MKKKSFCLNFRANKKKKNFVLSKKNIFGKTQKFKICVPFFTYTENKINTHISPFDSFSCLFASQSIESLQNQKFSKYSLQKYQRSNQDTLIVQRPMVREGDWVQSGDLLADCASSLGGELCLGKNIFIAYMPWEGYNYEDAILISQRLVTEDVYTSVHIESYEVETKNTKLGKEQITNKIPDIPEKEKNHLDERGIVKLGTFVHEGQILVGKVTPIQKKYRSGYEKLLYTILEKELIPMRDSSLRTPKGLKAKVVEIKILNFSWNFAPTEKTLPSPIQQKKKNSKILLKKQRKPERVQVYLAEKRKIQVGDKMAGRHGNKGIVSKILPIQDMPFLPDGTPLDMVLNPLGVPSRMNVGQIYECLLGLASKYLNHYYRIQAFDEIYGPHASRSFTFAKLYEARLKTNQKWLFNPCYPGKMQIFDGQTGEPYDSPVTVGIAYMLKLVHLVDDKIHARSTGPYSLVTQQPLRGRSKYGGQRLGEMEVWAIEAYGAAFILLEMLTIKSDDISGRMTLWSNILLNMPIYIGTPESFKVLICELQALCLDMGLFQLNKKGFLTQIEHLMQLP.

Belongs to the RNA polymerase beta chain family. As to quaternary structure, in plastids the minimal PEP RNA polymerase catalytic core is composed of four subunits: alpha, beta, beta', and beta''. When a (nuclear-encoded) sigma factor is associated with the core the holoenzyme is formed, which can initiate transcription.

It localises to the plastid. The protein resides in the chloroplast. The catalysed reaction is RNA(n) + a ribonucleoside 5'-triphosphate = RNA(n+1) + diphosphate. Its function is as follows. DNA-dependent RNA polymerase catalyzes the transcription of DNA into RNA using the four ribonucleoside triphosphates as substrates. This Tetradesmus obliquus (Green alga) protein is DNA-directed RNA polymerase subunit beta C-terminal section (rpoB2).